A 2250-amino-acid polypeptide reads, in one-letter code: DNA polymerase epsilon catalytic subunit A (2250 aa).

Disordered stretches follow at residues 1-63 (MPSR…GTAA), 235-259 (NGHG…DKEP), and 1990-2010 (PGTE…KAAS). Positions 32 to 41 (GGGGGGGGVA) are enriched in gly residues. Residues 249-259 (DDTKKKKDKEP) are compositionally biased toward basic and acidic residues. A compositionally biased stretch (polar residues) spans 1990–2000 (PGTEATSTMNP). The Zn(2+) site is built by Cys2118, Cys2121, Cys2156, and Cys2159. The segment at 2118 to 2159 (CKKCNAIRDVDLCRDPDRLPSVNPDSGEMLEPARKNWVCHKC) adopts a CysA-type zinc-finger fold. [4Fe-4S] cluster-binding residues include Cys2190, Cys2193, Cys2205, and Cys2207. Residues 2190 to 2207 (CLKCSQTKSDNLAATCKC) carry the CysB motif motif.

The protein belongs to the DNA polymerase type-B family. As to quaternary structure, heterotetramer. Consists of 4 subunits: POL2, DPB2, DPB3 and DPB4. The cofactor is [4Fe-4S] cluster.

It localises to the nucleus. It catalyses the reaction DNA(n) + a 2'-deoxyribonucleoside 5'-triphosphate = DNA(n+1) + diphosphate. In terms of biological role, DNA polymerase II participates in chromosomal DNA replication. This Cryptococcus neoformans var. neoformans serotype D (strain JEC21 / ATCC MYA-565) (Filobasidiella neoformans) protein is DNA polymerase epsilon catalytic subunit A (POL2).